Reading from the N-terminus, the 438-residue chain is Ribosomal protein uS12 methylthiotransferase RimO (438 aa).

Residues 5-115 (PRVGFVSLGC…VMSAVHTHLP (111 aa)) form the MTTase N-terminal domain. The [4Fe-4S] cluster site is built by C14, C50, C79, C146, C150, and C153. The Radical SAM core domain occupies 132–369 (LTPKHYAYLK…MAVQAEISAR (238 aa)). The 67-residue stretch at 372–438 (ERRVGQTLQV…SEHDLWGERR (67 aa)) folds into the TRAM domain.

This sequence belongs to the methylthiotransferase family. RimO subfamily. It depends on [4Fe-4S] cluster as a cofactor.

The protein localises to the cytoplasm. It carries out the reaction L-aspartate(89)-[ribosomal protein uS12]-hydrogen + (sulfur carrier)-SH + AH2 + 2 S-adenosyl-L-methionine = 3-methylsulfanyl-L-aspartate(89)-[ribosomal protein uS12]-hydrogen + (sulfur carrier)-H + 5'-deoxyadenosine + L-methionine + A + S-adenosyl-L-homocysteine + 2 H(+). Functionally, catalyzes the methylthiolation of an aspartic acid residue of ribosomal protein uS12. This is Ribosomal protein uS12 methylthiotransferase RimO from Chromobacterium violaceum (strain ATCC 12472 / DSM 30191 / JCM 1249 / CCUG 213 / NBRC 12614 / NCIMB 9131 / NCTC 9757 / MK).